The chain runs to 115 residues: MNFVLALTINTLLALLLMILTFWLPQLNPYMEKSDPYECGFDPAYPARIPFSMKFFLVAITFLLFDLEIALLLPLPWALQTTNLPLMTTSSLMLIIILALGLTYEWSQKGLDWTE.

A run of 3 helical transmembrane segments spans residues 3-23 (FVLA…LTFW), 55-75 (FFLV…LLPL), and 84-104 (LPLM…GLTY).

The protein belongs to the complex I subunit 3 family. In terms of assembly, core subunit of respiratory chain NADH dehydrogenase (Complex I) which is composed of 45 different subunits. Interacts with TMEM186. Interacts with TMEM242.

It is found in the mitochondrion inner membrane. The catalysed reaction is a ubiquinone + NADH + 5 H(+)(in) = a ubiquinol + NAD(+) + 4 H(+)(out). Functionally, core subunit of the mitochondrial membrane respiratory chain NADH dehydrogenase (Complex I) which catalyzes electron transfer from NADH through the respiratory chain, using ubiquinone as an electron acceptor. Essential for the catalytic activity of complex I. This chain is NADH-ubiquinone oxidoreductase chain 3, found in Pongo pygmaeus (Bornean orangutan).